The primary structure comprises 727 residues: NHL repeat-containing protein 2 (727 aa).

The 156-residue stretch at 43-198 folds into the Thioredoxin domain; the sequence is RERDLTVPEL…TLKFYKERGQ (156 aa). NHL repeat units lie at residues 207–249, 260–302, 330–364, 404–434, 456–500, and 513–557; these read KLYK…TLKN, NSGR…IDLE, ISSP…VWAL, FAQP…VRMI, AFGD…VDPK, and ASNV…LDLE.

Monomer.

The protein localises to the cytoplasm. It localises to the cytosol. Required for normal embryonic development. This chain is NHL repeat-containing protein 2 (NHLRC2), found in Gallus gallus (Chicken).